The sequence spans 427 residues: N-formyl-4-amino-5-aminomethyl-2-methylpyrimidine deformylase (427 aa).

A Zn(2+)-binding site is contributed by histidine 91. The active site involves aspartate 93. Aspartate 124 provides a ligand contact to Zn(2+). Glutamate 158 acts as the Proton acceptor in catalysis. Residues glutamate 159, aspartate 182, and histidine 396 each contribute to the Zn(2+) site.

It belongs to the peptidase M20A family. Zn(2+) is required as a cofactor. Requires Co(2+) as cofactor.

The enzyme catalyses N-formyl-4-amino-5-aminomethyl-2-methylpyrimidine + H2O = 4-amino-5-aminomethyl-2-methylpyrimidine + formate. Its pathway is cofactor biosynthesis; thiamine diphosphate biosynthesis. Catalyzes the deformylation of the formylaminopyrimidine N-formyl-4-amino-5-aminomethyl-2-methylpyrimidine (FAMP) to give the corresponding aminopyrimidine. The protein is N-formyl-4-amino-5-aminomethyl-2-methylpyrimidine deformylase of Halalkalibacterium halodurans (strain ATCC BAA-125 / DSM 18197 / FERM 7344 / JCM 9153 / C-125) (Bacillus halodurans).